Consider the following 447-residue polypeptide: Protein cortex (447 aa).

6 WD repeats span residues Thr108–Gly148, Phe149–Ser188, Asn198–Arg237, Asp281–Thr325, Gly344–Gly380, and Ser384–Lys423. A D-box motif is present at residues Ser384–Ser395.

Belongs to the WD repeat CORT family.

It is found in the cytoplasm. In terms of biological role, controls wing pigmentation patterning by regulating scale cell development, thereby playing a key role in mimicry and crypsis. Probably acts as an activator of the anaphase promoting complex/cyclosome (APC/C) that promotes the ubiquitin ligase activity and substrate specificity of the APC/C. This is Protein cortex from Heliconius melpomene (Postman butterfly).